A 209-amino-acid chain; its full sequence is Uracil phosphoribosyltransferase (209 aa).

Residues R79, R104, and 131-139 (DPMLATGHS) each bind 5-phospho-alpha-D-ribose 1-diphosphate. Uracil is bound by residues I194 and 199–201 (GDA). D200 contacts 5-phospho-alpha-D-ribose 1-diphosphate.

Belongs to the UPRTase family. Requires Mg(2+) as cofactor.

It carries out the reaction UMP + diphosphate = 5-phospho-alpha-D-ribose 1-diphosphate + uracil. Its pathway is pyrimidine metabolism; UMP biosynthesis via salvage pathway; UMP from uracil: step 1/1. Allosterically activated by GTP. Catalyzes the conversion of uracil and 5-phospho-alpha-D-ribose 1-diphosphate (PRPP) to UMP and diphosphate. The chain is Uracil phosphoribosyltransferase from Caulobacter vibrioides (strain ATCC 19089 / CIP 103742 / CB 15) (Caulobacter crescentus).